Consider the following 309-residue polypeptide: Foldase protein PrsA 2 (309 aa).

The N-terminal stretch at Met-1–Ala-22 is a signal peptide. The N-palmitoyl cysteine moiety is linked to residue Cys-23. Cys-23 carries S-diacylglycerol cysteine lipidation. Residues Thr-146–Lys-241 enclose the PpiC domain.

It belongs to the PrsA family.

The protein localises to the cell membrane. It carries out the reaction [protein]-peptidylproline (omega=180) = [protein]-peptidylproline (omega=0). Its function is as follows. Plays a major role in protein secretion by helping the post-translocational extracellular folding of several secreted proteins. The polypeptide is Foldase protein PrsA 2 (Streptococcus pyogenes serotype M6 (strain ATCC BAA-946 / MGAS10394)).